The sequence spans 394 residues: Exodeoxyribonuclease 7 large subunit (394 aa).

The protein belongs to the XseA family. Heterooligomer composed of large and small subunits.

It localises to the cytoplasm. The catalysed reaction is Exonucleolytic cleavage in either 5'- to 3'- or 3'- to 5'-direction to yield nucleoside 5'-phosphates.. In terms of biological role, bidirectionally degrades single-stranded DNA into large acid-insoluble oligonucleotides, which are then degraded further into small acid-soluble oligonucleotides. This chain is Exodeoxyribonuclease 7 large subunit, found in Thermotoga sp. (strain RQ2).